A 591-amino-acid chain; its full sequence is MMRSHYCGQLNESLDGQEVTLCGWVHRRRDHGGVIFLDVRDREGLAQVVFDPDRAETFAKADRVRSEFVVKITGKVRLRPEGARNPNMASGSIEVLGYELEVLNQAETPPFPLDEYSDVGEETRLRYRFIDLRRPEMAAKLKLRARITSSIRRYLDDNGFLDVETPILGRPTPEGARDYLVPSRTYPGHFFALPQSPQLFKQLLMVAGFDRYYQIAKCFRDEDLRADRQPEFTQIDIETSFLDESDIIGITEKMVRQLFKEVLDVEFDEFPHMPFEEAMRRYGSDKPDLRIPLELVDVADQLKEVEFKVFSGPANDPKGRVAALRVPGAASMPRSQIDDYTKFVGIYGAKGLAYIKVNERAKGVEGLQSPIVKFIPEANLNVILDRVGAVDGDIVFFGADKAKIVCDALGALRIKVGHDLKLLTREWAPMWVVDFPMFEENDDGSLSALHHPFTSPKCTPAELEANPGAALSRAYDMVLNGTELGGGSIRIHDKSMQQAVFRVLGIDEAEQEEKFGFLLDALKYGAPPHGGLAFGLDRLVMLMTGASSIREVIAFPKTQSAGDVMTQAPGSVDGKALRELHIRLREQPKAE.

Residue Glu174 coordinates L-aspartate. Residues 198–201 form an aspartate region; sequence QLFK. Arg220 serves as a coordination point for L-aspartate. Residues 220 to 222 and Gln229 contribute to the ATP site; that span reads RDE. Residue His450 participates in L-aspartate binding. Glu483 lines the ATP pocket. Arg490 contributes to the L-aspartate binding site. 535-538 lines the ATP pocket; that stretch reads GLDR.

It belongs to the class-II aminoacyl-tRNA synthetase family. Type 1 subfamily. Homodimer.

It localises to the cytoplasm. The catalysed reaction is tRNA(Asx) + L-aspartate + ATP = L-aspartyl-tRNA(Asx) + AMP + diphosphate. Aspartyl-tRNA synthetase with relaxed tRNA specificity since it is able to aspartylate not only its cognate tRNA(Asp) but also tRNA(Asn). Reaction proceeds in two steps: L-aspartate is first activated by ATP to form Asp-AMP and then transferred to the acceptor end of tRNA(Asp/Asn). In Pseudomonas aeruginosa (strain LESB58), this protein is Aspartate--tRNA(Asp/Asn) ligase.